The sequence spans 244 residues: MSSQDVLIHSDDPCHPANLICTLCKQFFHNNWCTGTGGGISIKDPNTNYYYLAPSGVQKEKMTPEDLFVMDAQTLEYLRSPKLYKPSACTPLFLACYQKKDAGAIIHTHSQNAVICSLVFGDEFRIANIEQIKAIPSGKVDPVTKKPMTLSFFDTLKIPIIENMAHEDELIDDLHKTFKDYPDTCAVIVRRHGIFVWGPTIDKAKIFNEAIDYLMELAIKMYQMGIPPDCGIGEEKKHLKMASP.

Residue cysteine 89 coordinates substrate. The Zn(2+) site is built by histidine 107 and histidine 109. Glutamate 130 (proton donor/acceptor) is an active-site residue. Residue histidine 192 coordinates Zn(2+).

It belongs to the aldolase class II family. MtnB subfamily. Requires Zn(2+) as cofactor.

It is found in the cytoplasm. The catalysed reaction is 5-(methylsulfanyl)-D-ribulose 1-phosphate = 5-methylsulfanyl-2,3-dioxopentyl phosphate + H2O. Its pathway is amino-acid biosynthesis; L-methionine biosynthesis via salvage pathway; L-methionine from S-methyl-5-thio-alpha-D-ribose 1-phosphate: step 2/6. Functionally, catalyzes the dehydration of methylthioribulose-1-phosphate (MTRu-1-P) into 2,3-diketo-5-methylthiopentyl-1-phosphate (DK-MTP-1-P). This chain is Methylthioribulose-1-phosphate dehydratase, found in Saccharomyces cerevisiae (strain YJM789) (Baker's yeast).